The chain runs to 571 residues: Sulfite reductase [NADPH] hemoprotein beta-component (571 aa).

Positions 435, 441, 480, and 484 each coordinate [4Fe-4S] cluster. Cys-484 lines the siroheme pocket.

It belongs to the nitrite and sulfite reductase 4Fe-4S domain family. Alpha(8)-beta(8). The alpha component is a flavoprotein, the beta component is a hemoprotein. The cofactor is siroheme. Requires [4Fe-4S] cluster as cofactor.

It catalyses the reaction hydrogen sulfide + 3 NADP(+) + 3 H2O = sulfite + 3 NADPH + 4 H(+). Its pathway is sulfur metabolism; hydrogen sulfide biosynthesis; hydrogen sulfide from sulfite (NADPH route): step 1/1. Component of the sulfite reductase complex that catalyzes the 6-electron reduction of sulfite to sulfide. This is one of several activities required for the biosynthesis of L-cysteine from sulfate. This Musicola paradisiaca (strain Ech703) (Dickeya paradisiaca) protein is Sulfite reductase [NADPH] hemoprotein beta-component.